Consider the following 290-residue polypeptide: 33 kDa chaperonin (290 aa).

Cystine bridges form between C235/C237 and C268/C271.

The protein belongs to the HSP33 family. In terms of processing, under oxidizing conditions two disulfide bonds are formed involving the reactive cysteines. Under reducing conditions zinc is bound to the reactive cysteines and the protein is inactive.

The protein localises to the cytoplasm. Redox regulated molecular chaperone. Protects both thermally unfolding and oxidatively damaged proteins from irreversible aggregation. Plays an important role in the bacterial defense system toward oxidative stress. This chain is 33 kDa chaperonin, found in Streptococcus pneumoniae (strain P1031).